Reading from the N-terminus, the 64-residue chain is DNA gyrase inhibitor YacG (64 aa).

C9, C12, C28, and C32 together coordinate Zn(2+). Residues 42-64 (DEENAIPGAPDMSDSDGWSEEQY) form a disordered region. Residues 54-64 (SDSDGWSEEQY) are compositionally biased toward acidic residues.

This sequence belongs to the DNA gyrase inhibitor YacG family. Interacts with GyrB. Zn(2+) serves as cofactor.

In terms of biological role, inhibits all the catalytic activities of DNA gyrase by preventing its interaction with DNA. Acts by binding directly to the C-terminal domain of GyrB, which probably disrupts DNA binding by the gyrase. The chain is DNA gyrase inhibitor YacG from Vibrio vulnificus (strain CMCP6).